Here is a 477-residue protein sequence, read N- to C-terminus: MAQRYDELPHYGGMDGVGVPASMYGDPHAPRPIPPVHHLNHGPPLHATQHYGAHAPHPNVMPASMGSAVNDALKRDKDAIYGHPLFPLLALVFEKCELATCTPREPGVAGGDVCSSDSFNEDIAVFAKQVRAEKPLFSSNPELDNLMIQAIQVLRFHLLELEKVHELCDNFCHRYISCLKGKMPIDLVIDERDGSSKSDHEELSGSSTNLADHNPSSWRDHDDATSTHSAGTPGPSSGGHASQSGDNSSEQGDGLDNSVASPGTGDDDDPDKDKKRQKKRGIFPKVATNIMRAWLFQHLTHPYPSEEQKKQLAQDTGLTILQVNNWFINARRRIVQPMIDQSNRAGFLLDPSVSQGAAYSPEGQPMGSFVLDGQQHMGIRPAGLQSMPGDYVSQGGPMGMGMAQPSYTPPQMTPHPTQLRHGPPMHSYLPSHPHHPAMVMHGGPPTHPGMTMSAQSPTMLNSVDPNVGGQVMDIHAQ.

The segment at 71–191 is required for interaction with PBX1; the sequence is DALKRDKDAI…KMPIDLVIDE (121 aa). The region spanning 110–193 is the MEIS N-terminal domain; that stretch reads GGDVCSSDSF…PIDLVIDERD (84 aa). A compositionally biased stretch (basic and acidic residues) spans 193–203; the sequence is DGSSKSDHEEL. The tract at residues 193 to 283 is disordered; sequence DGSSKSDHEE…KKRQKKRGIF (91 aa). Composition is skewed to polar residues over residues 204-217 and 239-251; these read SGSS…NPSS and GHAS…SSEQ. Positions 276-338 form a DNA-binding region, homeobox; TALE-type; the sequence is RQKKRGIFPK…NARRRIVQPM (63 aa). Positions 299 to 333 are interaction with DNA; sequence LTHPYPSEEQKKQLAQDTGLTILQVNNWFINARRR. Residues 340 to 477 form a transcriptional activation domain region; sequence DQSNRAGFLL…GGQVMDIHAQ (138 aa).

It belongs to the TALE/MEIS homeobox family. In terms of assembly, monomer and homodimer. Heterodimer with HOXB13. Isoform Meis2A interacts with TLX1. Isoform Meis2B interacts with HOXA13 and PBX1 isoform PBX1b. Isoform Meis2D interacts with SP1, SP3 and KLF4. Isoform Meis2D interacts with PBX1 isoform PBX1a; the interaction partially relieves MEIS2 autoinhibition. Isoform Meis2B is part of a PDX1:PBX1b:MEIS2b complex; Meis2B is recruited by PBX1b and can be replaced by isoform Meis2D in a small fraction of complexes. Can form trimeric complexes including HOXB8 and PBX2 or PBX3. Displays spatially restricted expression patterns in the developing nervous system, limbs, face, and in various viscera. In adult, it is mainly expressed in the brain and female genital tract, with a different distribution of the alternative splice forms in these organs. Lower expression in lung and only basal level in heart, liver, kidney, spleen, and testis. Expressed in pancreatic islets (beta-cells only).

Its subcellular location is the nucleus. It is found in the cytoplasm. The protein resides in the perinuclear region. Involved in transcriptional regulation. Binds to HOX or PBX proteins to form dimers, or to a DNA-bound dimer of PBX and HOX proteins and thought to have a role in stabilization of the homeoprotein-DNA complex. Isoform Meis2B is required for the activity of a PDX1:PBX1b:MEIS2b complex in pancreatic acinar cells involved in the transcriptional activation of the ELA1 enhancer; the complex binds to the enhancer B element and cooperates with the transcription factor 1 complex (PTF1) bound to the enhancer A element; MEIS2 is not involved in complex DNA-binding. Probably in complex with PBX1, is involved in transcriptional regulation by KLF4. Isoforms Meis2B and Meis2D can bind to a EPHA8 promoter sequence containing the DNA motif 5'-CGGTCA-3'; in cooperation with a PBX protein (such as PBX2) is proposed to be involved in the transcriptional activation of EPHA8 in the developing midbrain. May be involved in regulation of myeloid differentiation. Can bind to the DNA sequence 5'-TGACAG-3'in the activator ACT sequence of the D(1A) dopamine receptor (DRD1) promoter and activate DRD1 transcription. In Mus musculus (Mouse), this protein is Homeobox protein Meis2 (Meis2).